The chain runs to 187 residues: UPF0301 protein YPTS_3341 (187 aa).

It belongs to the UPF0301 (AlgH) family.

The protein is UPF0301 protein YPTS_3341 of Yersinia pseudotuberculosis serotype IB (strain PB1/+).